Reading from the N-terminus, the 304-residue chain is Ornithine carbamoyltransferase (304 aa).

Carbamoyl phosphate is bound by residues 53–56 (STRT), glutamine 80, arginine 104, and 131–134 (HPCQ). Residues asparagine 162, aspartate 219, and 223 to 224 (SM) contribute to the L-ornithine site. Carbamoyl phosphate contacts are provided by residues 259–260 (CL) and arginine 287.

It belongs to the aspartate/ornithine carbamoyltransferase superfamily. OTCase family.

The protein resides in the cytoplasm. The catalysed reaction is carbamoyl phosphate + L-ornithine = L-citrulline + phosphate + H(+). The protein operates within amino-acid biosynthesis; L-arginine biosynthesis; L-arginine from L-ornithine and carbamoyl phosphate: step 1/3. In terms of biological role, reversibly catalyzes the transfer of the carbamoyl group from carbamoyl phosphate (CP) to the N(epsilon) atom of ornithine (ORN) to produce L-citrulline. This is Ornithine carbamoyltransferase from Herminiimonas arsenicoxydans.